The primary structure comprises 376 residues: E3 ubiquitin-protein ligase RNF34 (376 aa).

An FYVE-type zinc finger spans residues 56–107; that stretch reads EGPNIVCKACGLSFSVFRKKHVCCDCKKDFCSLCSVSQENLRRCSTCHLLQE. The SAP 1 domain maps to 115-134; the sequence is LMRLKVKDLRQYLLLRNIPT. Phosphoserine is present on serine 169. The disordered stretch occupies residues 216-256; sequence IASANTDDDDDDDDDDDDDEDDDDEQEEEEQNPGLSKKKAR. A compositionally biased stretch (acidic residues) spans 221-246; it reads TDDDDDDDDDDDDDEDDDDEQEEEEQ. Phosphoserine occurs at positions 258 and 260. Residues 268–282 enclose the SAP 2 domain; it reads VEGMSVRQLKEILAR. The segment at 329 to 364 adopts an RING-type zinc-finger fold; that stretch reads CRICMDAVIDCVLLECGHMVTCTKCGKRMSECPICR.

In terms of assembly, interacts with CASP8 and CASP10. Interacts with p53/TP53; involved in p53/TP53 ubiquitination. Interacts (via RING-type zinc finger) with MDM2; the interaction stabilizes MDM2. Interacts (via RING-type zinc finger) with PPARGC1A. Interacts with NOD1. Autoubiquitinated (in vitro). Post-translationally, proteolytically cleaved by caspases upon induction of apoptosis by TNF.

The protein localises to the cell membrane. It localises to the endomembrane system. Its subcellular location is the nucleus. It is found in the nucleus speckle. The protein resides in the cytoplasm. The protein localises to the cytosol. The enzyme catalyses S-ubiquitinyl-[E2 ubiquitin-conjugating enzyme]-L-cysteine + [acceptor protein]-L-lysine = [E2 ubiquitin-conjugating enzyme]-L-cysteine + N(6)-ubiquitinyl-[acceptor protein]-L-lysine.. It participates in protein modification; protein ubiquitination. Its function is as follows. E3 ubiquitin-protein ligase that regulates several biological processes through the ubiquitin-mediated proteasomal degradation of various target proteins. Ubiquitinates the caspases CASP8 and CASP10, promoting their proteasomal degradation, to negatively regulate cell death downstream of death domain receptors in the extrinsic pathway of apoptosis. May mediate 'Lys-48'-linked polyubiquitination of RIPK1 and its subsequent proteasomal degradation thereby indirectly regulating the tumor necrosis factor-mediated signaling pathway. Negatively regulates p53/TP53 through its direct ubiquitination and targeting to proteasomal degradation. Indirectly, may also negatively regulate p53/TP53 through ubiquitination and degradation of SFN. Mediates PPARGC1A proteasomal degradation probably through ubiquitination thereby indirectly regulating the metabolism of brown fat cells. Possibly involved in innate immunity, through 'Lys-48'-linked polyubiquitination of NOD1 and its subsequent proteasomal degradation. The chain is E3 ubiquitin-protein ligase RNF34 from Mus musculus (Mouse).